A 337-amino-acid chain; its full sequence is MADAAPQLGKRKRELDVEEAHAASTEEKEAGVGNGTCAPVRLPFSGFRLQKVLRESARDKIIFLHGKVNEASGDGDGEDAVVILEKTPFQVEQVAQLLTGSPELQLQFSNDIYSTYHLFPPRQLNDVKTTVVYPATEKHLQKYLRQDLRLIRETGDDYRNITLPHLESQSLSIQWVYNILDKKAEADRIVFENPDPSDGFVLIPDLKWNQQQLDDLYLIAICHRRGIRSLRDLTPEHLPLLRNILHQGQEAILQRYRMKGDHLRVYLHYLPSYYHLHVHFTALGFEAPGSGVERAHLLAEVIENLECDPRHYQQRTLTFALRADDPLLKLLQEAQQS.

Residues 1–35 (MADAAPQLGKRKRELDVEEAHAASTEEKEAGVGNG) are disordered. The residue at position 2 (A2) is an N-acetylalanine. The short motif at 10-13 (KRKR) is the nuclear localization signal (NLS) element. The span at 13-30 (RELDVEEAHAASTEEKEA) shows a compositional bias: basic and acidic residues. Phosphoserine is present on residues S24 and S101. 2 positions are modified to N6-acetyllysine: K138 and K142. The nuclear export sequence (NES) motif lies at 142 to 154 (KYLRQDLRLIRET). Substrate contacts are provided by residues W175, E185, D205, K207, and 268-279 (HYLPSYYHLHVH). Residues 275–279 (HLHVH) carry the Histidine triad motif motif. The active-site Nucleophile is H277.

It belongs to the HIT family. Homodimer. Associates with components of the exosome multienzyme ribonuclease complex, such as EXOSC3 and EXOSC4. Interacts with NDOR1. As to expression, detected in liver, brain, kidney, testis and prostate.

The protein resides in the cytoplasm. It localises to the nucleus. The catalysed reaction is a 5'-end (N(7)-methyl 5'-triphosphoguanosine)-ribonucleoside in mRNA + H2O = N(7)-methyl-GMP + a 5'-end diphospho-ribonucleoside in mRNA + 2 H(+). With respect to regulation, the hydrolytic product 7-methylguanosine diphosphate (m7GDP) efficiently inhibits the decapping scavenger activity and acts as a competitive inhibitor in vitro. Inhibited by 2,4-diaminoquinazoline. In terms of biological role, decapping scavenger enzyme that catalyzes the cleavage of a residual cap structure following the degradation of mRNAs by the 3'-&gt;5' exosome-mediated mRNA decay pathway. Hydrolyzes cap analog structures like 7-methylguanosine nucleoside triphosphate (m7GpppG) with up to 10 nucleotide substrates (small capped oligoribonucleotides) and specifically releases 5'-phosphorylated RNA fragments and 7-methylguanosine monophosphate (m7GMP). Cleaves cap analog structures like tri-methyl guanosine nucleoside triphosphate (m3(2,2,7)GpppG) with very poor efficiency. Does not hydrolyze unmethylated cap analog (GpppG) and shows no decapping activity on intact m7GpppG-capped mRNA molecules longer than 25 nucleotides. Does not hydrolyze 7-methylguanosine diphosphate (m7GDP) to m7GMP. May also play a role in the 5'-&gt;3 mRNA decay pathway; m7GDP, the downstream product released by the 5'-&gt;3' mRNA mediated decapping activity, may be also converted by DCPS to m7GMP. Binds to m7GpppG and strongly to m7GDP. Plays a role in first intron splicing of pre-mRNAs. Inhibits activation-induced cell death. This Homo sapiens (Human) protein is m7GpppX diphosphatase (DCPS).